Reading from the N-terminus, the 177-residue chain is Large ribosomal subunit protein uL6 (177 aa).

It belongs to the universal ribosomal protein uL6 family. In terms of assembly, part of the 50S ribosomal subunit.

This protein binds to the 23S rRNA, and is important in its secondary structure. It is located near the subunit interface in the base of the L7/L12 stalk, and near the tRNA binding site of the peptidyltransferase center. The chain is Large ribosomal subunit protein uL6 from Rhizorhabdus wittichii (strain DSM 6014 / CCUG 31198 / JCM 15750 / NBRC 105917 / EY 4224 / RW1) (Sphingomonas wittichii).